The chain runs to 393 residues: Elongation factor Tu (393 aa).

The 194-residue stretch at Lys10–Val203 folds into the tr-type G domain. The segment at Gly19 to Thr26 is G1. Residue Gly19–Thr26 coordinates GTP. Position 26 (Thr26) interacts with Mg(2+). The segment at Gly60–Ser64 is G2. The interval Asp81–Gly84 is G3. GTP is bound by residues Asp81 to His85 and Asn136 to Asp139. The interval Asn136–Asp139 is G4. A G5 region spans residues Ser173–Leu175.

It belongs to the TRAFAC class translation factor GTPase superfamily. Classic translation factor GTPase family. EF-Tu/EF-1A subfamily. In terms of assembly, monomer.

Its subcellular location is the cytoplasm. The catalysed reaction is GTP + H2O = GDP + phosphate + H(+). Its function is as follows. GTP hydrolase that promotes the GTP-dependent binding of aminoacyl-tRNA to the A-site of ribosomes during protein biosynthesis. This is Elongation factor Tu from Chlorobium phaeobacteroides (strain BS1).